Here is a 330-residue protein sequence, read N- to C-terminus: MFNALVVDKDEESGKTQAAVKQLSLTDLPVGEVTVAVEYSTVNYKDGLCIGPGGGLVRKYPHVPGIDFAGTVENSSDERYKPGDKVVLTGWRVGEAHWGGYSQKANVRADWLVPLPEGLDTRQAMAVGTAGFTAMLAVMALEDHGLTPGHGPVLVTGAAGGVGSVATAILAHLGYEVAAVTGRPETADYLTSLGATQIVARDEINETVKRPLESEIWAGCVDAVGGAMLARVLGQMKYGASVAAVGLAGGAGLPATVIPFLLRGVNLLGIDSVMQPYANRLRAWERIARDLPMDKLEAMIRPATLSDLPGLGADILKGQVQGRVVVDVNA.

Residues tyrosine 44, alanine 159–valine 162, threonine 181–arginine 183, arginine 201, leucine 247, and serine 272 each bind NADP(+).

This sequence belongs to the zinc-containing alcohol dehydrogenase family. Acrylyl-CoA reductase subfamily. As to quaternary structure, homodimer.

It localises to the cytoplasm. It carries out the reaction propanoyl-CoA + NADP(+) = acryloyl-CoA + NADPH + H(+). In terms of biological role, probably catalyzes the NADPH-dependent reduction of acrylyl-CoA to propanoyl-CoA. Restores acrylate resistance when expressed in an E.coli strain K12 acuI deletion. This Ruegeria pomeroyi (strain ATCC 700808 / DSM 15171 / DSS-3) (Silicibacter pomeroyi) protein is Acrylyl-CoA reductase AcuI (acuI).